Reading from the N-terminus, the 1061-residue chain is DNA primase TraC (1061 aa).

The region spanning 850–938 (PALVIGEGYA…GKAIFPIFAP (89 aa)) is the Toprim domain. Positions 1034–1061 (EGQRQKVQQLKQQDIEQQEQRQRRARTY) are disordered.

Functionally, required for autonomous replication in E.coli. Transferred into the recipient cell during bacterial conjugation. Catalyzes the synthesis of short oligoribonucleotide primers with CpA or pCpA at their 5'-termini on a single-stranded template DNA. This Escherichia coli protein is DNA primase TraC (traC).